Here is a 539-residue protein sequence, read N- to C-terminus: GMP synthase [glutamine-hydrolyzing] (539 aa).

The region spanning 4–202 (KILILDFGSQ…VLDIAGAKPD (199 aa)) is the Glutamine amidotransferase type-1 domain. Cys-81 serves as the catalytic Nucleophile. Active-site residues include His-176 and Glu-178. The region spanning 203 to 395 (WIMRDHIEEA…LGLPAEMVYR (193 aa)) is the GMPS ATP-PPase domain. 230–236 (SGGVDSS) contributes to the ATP binding site.

As to quaternary structure, homodimer.

It carries out the reaction XMP + L-glutamine + ATP + H2O = GMP + L-glutamate + AMP + diphosphate + 2 H(+). The protein operates within purine metabolism; GMP biosynthesis; GMP from XMP (L-Gln route): step 1/1. Catalyzes the synthesis of GMP from XMP. In Burkholderia pseudomallei (strain 1106a), this protein is GMP synthase [glutamine-hydrolyzing].